A 344-amino-acid polypeptide reads, in one-letter code: MTDAGRQGRVEALSISVTAPYCRFEKTGSPDLEGDETVLGLIEHGTGHTDVSLVDGAPRTAVHTTTRDDEAFTEVWHAQRPVESGMDNGIAWARTDAYLFGVVRTGESGRYADATAALYTNVFQLTRSLGYPLLARTWNYVSGINTTNADGLEVYRDFCVGRAQALDEGGIDPATMPAATGIGAHGGGITCVFLAARGGVRINIENPAVLTAHHYPTTYGPRPPVFARATWLGPPEGGRLFISATAGILGHRTVHHGDVTGQCEVALDNMARVIGAENLRRHGVQRGHVLADVDHLKVYVRRREDLDTVRRVCAARLSSTAAVALLHTDIAREDLLVEIEGMVA.

Residues Y155, R162, Y215, and R228 each coordinate substrate. E338 serves as the catalytic Proton acceptor.

This sequence belongs to the FkbO/Hyg5 family. Monomer.

It catalyses the reaction chorismate + H2O = (3R,4R)-3,4-dihydroxy-3,4-dihydrobenzoate + pyruvate. With respect to regulation, competitively inhibited by 3-(2-carboxyethyl)benzoate. Involved in the biosynthesis of the macrocyclic amino acid-linked polyketides FK506 and FK520 which are potent immunosuppressants that prevent T-cell proliferation through initial binding to the immunophilin FKBP12. Catalyzes the hydrolysis of chorismate via a 1,4-conjugate elimination of water to yield (4R,5R)-4,5-dihydroxycyclohexa-1,5-dienecarboxylic acid (DCDC). The sequence is that of Chorismatase (fkbO) from Streptomyces hygroscopicus.